The primary structure comprises 285 residues: 2-dehydro-3-deoxyphosphooctonate aldolase (285 aa).

It belongs to the KdsA family.

Its subcellular location is the cytoplasm. It carries out the reaction D-arabinose 5-phosphate + phosphoenolpyruvate + H2O = 3-deoxy-alpha-D-manno-2-octulosonate-8-phosphate + phosphate. It functions in the pathway carbohydrate biosynthesis; 3-deoxy-D-manno-octulosonate biosynthesis; 3-deoxy-D-manno-octulosonate from D-ribulose 5-phosphate: step 2/3. The protein operates within bacterial outer membrane biogenesis; lipopolysaccharide biosynthesis. This Bordetella bronchiseptica (strain ATCC BAA-588 / NCTC 13252 / RB50) (Alcaligenes bronchisepticus) protein is 2-dehydro-3-deoxyphosphooctonate aldolase.